Here is a 184-residue protein sequence, read N- to C-terminus: UPF0316 protein BPUM_0594 (184 aa).

3 consecutive transmembrane segments (helical) span residues 9–29 (AFTM…FSTM), 41–61 (AAAF…SIVL), and 67–87 (IQNV…GMKI).

It belongs to the UPF0316 family.

The protein resides in the cell membrane. This chain is UPF0316 protein BPUM_0594, found in Bacillus pumilus (strain SAFR-032).